The sequence spans 466 residues: ATP synthase subunit beta (466 aa).

Residue 155–162 (GGAGVGKT) participates in ATP binding.

The protein belongs to the ATPase alpha/beta chains family. In terms of assembly, F-type ATPases have 2 components, CF(1) - the catalytic core - and CF(0) - the membrane proton channel. CF(1) has five subunits: alpha(3), beta(3), gamma(1), delta(1), epsilon(1). CF(0) has three main subunits: a(1), b(2) and c(9-12). The alpha and beta chains form an alternating ring which encloses part of the gamma chain. CF(1) is attached to CF(0) by a central stalk formed by the gamma and epsilon chains, while a peripheral stalk is formed by the delta and b chains.

It localises to the cell inner membrane. The enzyme catalyses ATP + H2O + 4 H(+)(in) = ADP + phosphate + 5 H(+)(out). Its function is as follows. Produces ATP from ADP in the presence of a proton gradient across the membrane. The catalytic sites are hosted primarily by the beta subunits. The sequence is that of ATP synthase subunit beta from Aromatoleum aromaticum (strain DSM 19018 / LMG 30748 / EbN1) (Azoarcus sp. (strain EbN1)).